The sequence spans 1430 residues: DNA-directed RNA polymerase subunit beta' (1430 aa).

Residues Cys71, Cys73, Cys86, and Cys89 each contribute to the Zn(2+) site. Residues Asp461, Asp463, and Asp465 each coordinate Mg(2+). Positions 815, 889, 896, and 899 each coordinate Zn(2+). The disordered stretch occupies residues 1388–1430 (RRQEAPAPAATPEQQAEEVFASLGQGEGEGPSPSDEASGPEVE). The segment covering 1392–1405 (APAPAATPEQQAEE) has biased composition (low complexity).

The protein belongs to the RNA polymerase beta' chain family. The RNAP catalytic core consists of 2 alpha, 1 beta, 1 beta' and 1 omega subunit. When a sigma factor is associated with the core the holoenzyme is formed, which can initiate transcription. The cofactor is Mg(2+). Zn(2+) serves as cofactor.

It carries out the reaction RNA(n) + a ribonucleoside 5'-triphosphate = RNA(n+1) + diphosphate. In terms of biological role, DNA-dependent RNA polymerase catalyzes the transcription of DNA into RNA using the four ribonucleoside triphosphates as substrates. The chain is DNA-directed RNA polymerase subunit beta' from Halorhodospira halophila (strain DSM 244 / SL1) (Ectothiorhodospira halophila (strain DSM 244 / SL1)).